A 657-amino-acid polypeptide reads, in one-letter code: UvrABC system protein B (657 aa).

A Helicase ATP-binding domain is found at Lys25 to Arg182. Gly38–Thr45 serves as a coordination point for ATP. The short motif at Tyr91 to Ile114 is the Beta-hairpin element. In terms of domain architecture, Helicase C-terminal spans Gln429–Ile595. The UVR domain maps to Lys621–Lys656.

It belongs to the UvrB family. In terms of assembly, forms a heterotetramer with UvrA during the search for lesions. Interacts with UvrC in an incision complex.

It localises to the cytoplasm. In terms of biological role, the UvrABC repair system catalyzes the recognition and processing of DNA lesions. A damage recognition complex composed of 2 UvrA and 2 UvrB subunits scans DNA for abnormalities. Upon binding of the UvrA(2)B(2) complex to a putative damaged site, the DNA wraps around one UvrB monomer. DNA wrap is dependent on ATP binding by UvrB and probably causes local melting of the DNA helix, facilitating insertion of UvrB beta-hairpin between the DNA strands. Then UvrB probes one DNA strand for the presence of a lesion. If a lesion is found the UvrA subunits dissociate and the UvrB-DNA preincision complex is formed. This complex is subsequently bound by UvrC and the second UvrB is released. If no lesion is found, the DNA wraps around the other UvrB subunit that will check the other stand for damage. This chain is UvrABC system protein B, found in Clostridium botulinum (strain Eklund 17B / Type B).